A 256-amino-acid chain; its full sequence is Extracellular serine-rich protein ARB_03024 (256 aa).

The N-terminal stretch at methionine 1–alanine 19 is a signal peptide. The interval lysine 135–alanine 235 is disordered. Residues glycine 149–glycine 159 are compositionally biased toward gly residues. 2 stretches are compositionally biased toward low complexity: residues serine 160 to proline 204 and proline 215 to alanine 235. Residue alanine 233 is the site of GPI-anchor amidated alanine attachment. Residues alanine 234 to leucine 256 constitute a propeptide, removed in mature form.

The protein resides in the cell membrane. Its subcellular location is the secreted. The sequence is that of Extracellular serine-rich protein ARB_03024 from Arthroderma benhamiae (strain ATCC MYA-4681 / CBS 112371) (Trichophyton mentagrophytes).